A 79-amino-acid polypeptide reads, in one-letter code: Small ribosomal subunit protein bS18 (79 aa).

Belongs to the bacterial ribosomal protein bS18 family. Part of the 30S ribosomal subunit. Forms a tight heterodimer with protein bS6.

Functionally, binds as a heterodimer with protein bS6 to the central domain of the 16S rRNA, where it helps stabilize the platform of the 30S subunit. In Bacillus subtilis (strain 168), this protein is Small ribosomal subunit protein bS18 (rpsR).